The following is a 200-amino-acid chain: NADH-quinone oxidoreductase subunit I 1 (200 aa).

4Fe-4S ferredoxin-type domains follow at residues 52–82 (LNRHPDGLEKCVGCELCAWACPADAIYVEGA) and 98–127 (RVYQINYARCILCGLCIEACPTRALTMTNE). Residues cysteine 62, cysteine 65, cysteine 68, cysteine 72, cysteine 107, cysteine 110, cysteine 113, and cysteine 117 each coordinate [4Fe-4S] cluster. Residues 181-200 (TERQVAVSKGEKPQDEGVEA) are disordered. Basic and acidic residues predominate over residues 189-200 (KGEKPQDEGVEA).

It belongs to the complex I 23 kDa subunit family. In terms of assembly, NDH-1 is composed of 14 different subunits. Subunits NuoA, H, J, K, L, M, N constitute the membrane sector of the complex. [4Fe-4S] cluster serves as cofactor.

Its subcellular location is the cell membrane. It carries out the reaction a quinone + NADH + 5 H(+)(in) = a quinol + NAD(+) + 4 H(+)(out). NDH-1 shuttles electrons from NADH, via FMN and iron-sulfur (Fe-S) centers, to quinones in the respiratory chain. The immediate electron acceptor for the enzyme in this species is believed to be ubiquinone. Couples the redox reaction to proton translocation (for every two electrons transferred, four hydrogen ions are translocated across the cytoplasmic membrane), and thus conserves the redox energy in a proton gradient. The sequence is that of NADH-quinone oxidoreductase subunit I 1 from Streptomyces avermitilis (strain ATCC 31267 / DSM 46492 / JCM 5070 / NBRC 14893 / NCIMB 12804 / NRRL 8165 / MA-4680).